Reading from the N-terminus, the 358-residue chain is Alanine racemase (358 aa).

Lys-34 serves as the catalytic Proton acceptor; specific for D-alanine. N6-(pyridoxal phosphate)lysine is present on Lys-34. Arg-130 contributes to the substrate binding site. Tyr-254 serves as the catalytic Proton acceptor; specific for L-alanine. Met-302 contributes to the substrate binding site.

The protein belongs to the alanine racemase family. Requires pyridoxal 5'-phosphate as cofactor.

The catalysed reaction is L-alanine = D-alanine. Its pathway is amino-acid biosynthesis; D-alanine biosynthesis; D-alanine from L-alanine: step 1/1. Its function is as follows. Catalyzes the interconversion of L-alanine and D-alanine. May also act on other amino acids. This is Alanine racemase (alr) from Actinobacillus succinogenes (strain ATCC 55618 / DSM 22257 / CCUG 43843 / 130Z).